The primary structure comprises 289 residues: Rhodopsin (289 aa).

The Extracellular portion of the chain corresponds to 1–7 (YLVNPAA). Residues 8 to 32 (YAALGAYMFLLILIGFPVNFLTLYV) traverse the membrane as a helical segment. Residues 33 to 44 (TLEHKKLRTPLN) lie on the Cytoplasmic side of the membrane. The helical transmembrane segment at 45 to 67 (YILLNLAVADLFMVLGGFTTTMY) threads the bilayer. At 68-81 (TSMHGYFVLGRLGC) the chain is on the extracellular side. Cysteine 81 and cysteine 158 are oxidised to a cystine. Residues 82-104 (NLEGFFATLGGEIALWSLVVLAI) traverse the membrane as a helical segment. The 'Ionic lock' involved in activated form stabilization signature appears at 105–107 (ERW). The Cytoplasmic portion of the chain corresponds to 105-123 (ERWIVVCKPISNFRFTEDH). Residues 124-144 (AIMGLAFSWVMALSCSVPPLV) traverse the membrane as a helical segment. Residues 145 to 173 (GWSRYIPEAMQCSCGVDYYTRAEGFNTES) lie on the Extracellular side of the membrane. Residues 174–195 (FVLYMFTVHFLIPLSVIFFCYG) traverse the membrane as a helical segment. At 196 to 223 (RLLCAVKEAAAAQQESETTQRSEKEVSR) the chain is on the cytoplasmic side. Residues 224–245 (MVVLMVIGFLVCWLPYASTAWW) form a helical membrane-spanning segment. The Extracellular segment spans residues 246–257 (IFCNQGSEFGPV). A helical membrane pass occupies residues 258 to 279 (FMTIPAFFAKSSAIYNPMIYIC). At lysine 267 the chain carries N6-(retinylidene)lysine. Over 280–289 (MNKQFRHCMI) the chain is Cytoplasmic.

Belongs to the G-protein coupled receptor 1 family. Opsin subfamily. Post-translationally, phosphorylated on some or all of the serine and threonine residues present in the C-terminal region. Contains one covalently linked retinal chromophore.

The protein resides in the membrane. It localises to the cell projection. Its subcellular location is the cilium. It is found in the photoreceptor outer segment. In terms of biological role, photoreceptor required for image-forming vision at low light intensity. While most salt water fish species use retinal as chromophore, most freshwater fish use 3-dehydroretinal, or a mixture of retinal and 3-dehydroretinal. Light-induced isomerization of 11-cis to all-trans retinal triggers a conformational change that activates signaling via G-proteins. Subsequent receptor phosphorylation mediates displacement of the bound G-protein alpha subunit by arrestin and terminates signaling. The sequence is that of Rhodopsin (rho) from Comephorus dybowskii.